Here is a 73-residue protein sequence, read N- to C-terminus: MPKKDAIEVEATVLEALPSAAFRVQLSNGHEVLAHISGKMRVHYIRILPGDRVLVELSPYDLTRGRVTYRFKS.

Positions 1 to 72 (MPKKDAIEVE…TRGRVTYRFK (72 aa)) constitute an S1-like domain.

The protein belongs to the IF-1 family. As to quaternary structure, component of the 30S ribosomal translation pre-initiation complex which assembles on the 30S ribosome in the order IF-2 and IF-3, IF-1 and N-formylmethionyl-tRNA(fMet); mRNA recruitment can occur at any time during PIC assembly.

It localises to the cytoplasm. Its function is as follows. One of the essential components for the initiation of protein synthesis. Stabilizes the binding of IF-2 and IF-3 on the 30S subunit to which N-formylmethionyl-tRNA(fMet) subsequently binds. Helps modulate mRNA selection, yielding the 30S pre-initiation complex (PIC). Upon addition of the 50S ribosomal subunit IF-1, IF-2 and IF-3 are released leaving the mature 70S translation initiation complex. The protein is Translation initiation factor IF-1 of Dehalococcoides mccartyi (strain ATCC BAA-2266 / KCTC 15142 / 195) (Dehalococcoides ethenogenes (strain 195)).